A 154-amino-acid chain; its full sequence is Prefoldin subunit 5 (154 aa).

Ala-2 is subject to N-acetylalanine. At Lys-42 the chain carries N6-acetyllysine. Ser-56 carries the post-translational modification Phosphoserine.

It belongs to the prefoldin subunit alpha family. As to quaternary structure, heterohexamer of two PFD-alpha type and four PFD-beta type subunits. Binds to MYC; interacts with its N-terminal domain. In terms of tissue distribution, highly expressed in pancreas and skeletal muscle and moderately in other tissues.

It is found in the nucleus. Its subcellular location is the cytoplasm. Its function is as follows. Binds specifically to cytosolic chaperonin (c-CPN) and transfers target proteins to it. Binds to nascent polypeptide chain and promotes folding in an environment in which there are many competing pathways for nonnative proteins. Represses the transcriptional activity of MYC. The chain is Prefoldin subunit 5 (PFDN5) from Homo sapiens (Human).